We begin with the raw amino-acid sequence, 194 residues long: AP-3 complex subunit sigma (194 aa).

Belongs to the adaptor complexes small subunit family. As to quaternary structure, adaptor protein complex 3 (AP-3) is a heterotetramer composed of 2 large adaptins (APL5 and APL6), a medium adaptin (APM3) and a small adaptin (APS3).

The protein resides in the golgi apparatus. The protein localises to the cytoplasmic vesicle membrane. Functionally, part of the AP-3 complex, an adaptor-related complex which is not clathrin-associated. The complex is associated with the Golgi region as well as more peripheral structures. It facilitates the budding of vesicles from the Golgi membrane and may be directly involved in trafficking to the vacuole. Required for the transport via the ALP pathway, which directs the transport of the cargo proteins PHO8 and VAM3 to the vacuole. The chain is AP-3 complex subunit sigma (APS3) from Saccharomyces cerevisiae (strain ATCC 204508 / S288c) (Baker's yeast).